A 160-amino-acid polypeptide reads, in one-letter code: Sperm protein associated with the nucleus on the X chromosome N2 (160 aa).

Disordered stretches follow at residues 1 to 48 (MEKP…TSEY) and 64 to 160 (SNQL…GEED). Over residues 10–35 (GEKRKSPCDSNNRNDEMQETPNRDLA) the composition is skewed to basic and acidic residues. Polar residues predominate over residues 64-79 (SNQLENDQSQENSVNP). Acidic residues predominate over residues 81-97 (QEEEDEGSSQEDEDLDS). The span at 136-148 (SSERSSQEEKDPD) shows a compositional bias: basic and acidic residues.

It belongs to the SPAN-X family.

This chain is Sperm protein associated with the nucleus on the X chromosome N2 (SPANXN2), found in Pongo pygmaeus (Bornean orangutan).